We begin with the raw amino-acid sequence, 145 residues long: 6-pyruvoyl tetrahydrobiopterin synthase (145 aa).

Residue serine 19 is modified to Phosphoserine. Histidine 24 provides a ligand contact to Zn(2+). Serine 28 bears the Phosphoserine mark. The active-site Proton acceptor is cysteine 43. 2 residues coordinate Zn(2+): histidine 49 and histidine 51. The active-site Charge relay system is histidine 90. Tyrosine 128 bears the Phosphotyrosine mark. The active-site Charge relay system is the glutamate 134.

It belongs to the PTPS family. Homohexamer formed of two homotrimers in a head to head fashion. Zn(2+) is required as a cofactor. In terms of processing, phosphorylation of Ser-19 is required for maximal enzyme activity.

The enzyme catalyses 7,8-dihydroneopterin 3'-triphosphate = 6-pyruvoyl-5,6,7,8-tetrahydropterin + triphosphate + H(+). It participates in cofactor biosynthesis; tetrahydrobiopterin biosynthesis; tetrahydrobiopterin from 7,8-dihydroneopterin triphosphate: step 1/3. Its function is as follows. Involved in the biosynthesis of tetrahydrobiopterin, an essential cofactor of aromatic amino acid hydroxylases. Catalyzes the transformation of 7,8-dihydroneopterin triphosphate into 6-pyruvoyl tetrahydropterin. This chain is 6-pyruvoyl tetrahydrobiopterin synthase (PTS), found in Pongo abelii (Sumatran orangutan).